We begin with the raw amino-acid sequence, 59 residues long: Small ribosomal subunit protein bS21 (59 aa).

The protein belongs to the bacterial ribosomal protein bS21 family.

The sequence is that of Small ribosomal subunit protein bS21 from Acaryochloris marina (strain MBIC 11017).